The primary structure comprises 786 residues: Exo-beta-D-glucosaminidase (786 aa).

Residues tyrosine 53, 102–103 (GE), 178–179 (DE), glutamate 306, glutamate 347, and tyrosine 379 each bind substrate. The Proton donor role is filled by glutamate 179. Glutamate 347 functions as the Nucleophile in the catalytic mechanism.

It belongs to the glycosyl hydrolase 35 family. In terms of assembly, homodimer.

Its subcellular location is the cytoplasm. The enzyme catalyses beta-D-glucosaminyl-(1-&gt;4)-N-acetyl-D-glucosamine + H2O = D-glucosamine + N-acetyl-D-glucosamine. Its pathway is glycan degradation; chitin degradation. In terms of biological role, exo-type enzyme that specifically cleaves the non-reducing terminal glycosidic bond of chitooligosaccharides. Catalyzes the hydrolysis of GlcN-GlcNAc to glucosamine (GlcN) and N-acetylglucosamine (GlcNAc). Involved in chitin degradation. Can also hydrolyze reduced chitobiose (GlcN2OH) and chitooligosaccharides of various chain lengths. The polypeptide is Exo-beta-D-glucosaminidase (Thermococcus kodakarensis (strain ATCC BAA-918 / JCM 12380 / KOD1) (Pyrococcus kodakaraensis (strain KOD1))).